The sequence spans 323 residues: Protoheme IX farnesyltransferase (323 aa).

Transmembrane regions (helical) follow at residues 28 to 48, 50 to 70, 99 to 119, 122 to 142, 150 to 170, 178 to 198, 223 to 243, 244 to 264, and 279 to 299; these read IIPLLLITTAAAMWIASNGQV, PVLLLVTLLGGTLAAASAQTL, HALIFAIILAVLSFTLFVVFV, ASALLAMSGIAFYMLIYTHML, IVIGGAAGSIPPLVGWAAVTG, ALFAIIFLWTPPHFWALALMI, IWIYTLIVVPFTFILVYPLAA, SGIVYTLVALVLGGMFIYKTW, and LFKYSILYMMLLCTGMVVDSL.

This sequence belongs to the UbiA prenyltransferase family. Protoheme IX farnesyltransferase subfamily.

It localises to the cell inner membrane. It catalyses the reaction heme b + (2E,6E)-farnesyl diphosphate + H2O = Fe(II)-heme o + diphosphate. Its pathway is porphyrin-containing compound metabolism; heme O biosynthesis; heme O from protoheme: step 1/1. Its function is as follows. Converts heme B (protoheme IX) to heme O by substitution of the vinyl group on carbon 2 of heme B porphyrin ring with a hydroxyethyl farnesyl side group. This is Protoheme IX farnesyltransferase from Gloeothece citriformis (strain PCC 7424) (Cyanothece sp. (strain PCC 7424)).